Here is a 95-residue protein sequence, read N- to C-terminus: SMAD5 antisense gene protein 1 (95 aa).

2 disordered regions span residues 1–24 (MHKQ…SSWS) and 43–70 (SSPT…KPAN). Positions 7–19 (LLPPPATPPPPPQ) are enriched in pro residues.

Expressed in fetal tissues.

The polypeptide is SMAD5 antisense gene protein 1 (SMAD5-AS1) (Homo sapiens (Human)).